Consider the following 386-residue polypeptide: Probable pectin lyase F (386 aa).

Positions 1–16 (MKTAVLSLLLALQAYA) are cleaved as a signal peptide. A disulfide bridge connects residues Cys-77 and Cys-101. The N-linked (GlcNAc...) asparagine glycan is linked to Asn-124. Arg-251 is a catalytic residue. Cys-326 and Cys-334 are joined by a disulfide.

It belongs to the polysaccharide lyase 1 family.

It localises to the secreted. It carries out the reaction Eliminative cleavage of (1-&gt;4)-alpha-D-galacturonan methyl ester to give oligosaccharides with 4-deoxy-6-O-methyl-alpha-D-galact-4-enuronosyl groups at their non-reducing ends.. Pectinolytic enzymes consist of four classes of enzymes: pectin lyase, polygalacturonase, pectin methylesterase and rhamnogalacturonase. Among pectinolytic enzymes, pectin lyase is the most important in depolymerization of pectin, since it cleaves internal glycosidic bonds of highly methylated pectins. The polypeptide is Probable pectin lyase F (pelF) (Neosartorya fischeri (strain ATCC 1020 / DSM 3700 / CBS 544.65 / FGSC A1164 / JCM 1740 / NRRL 181 / WB 181) (Aspergillus fischerianus)).